The primary structure comprises 433 residues: MQALNITAEQFSRLLSAHNLTREQFIHRYGLRPLVYTPELPARAKLAFALAGALIFALALFGNSLVIYVVTRSKAMRTVTNIFICSLALSDLLIAFFCIPVTMLQNISDKWLGGAFICKMVPFVQSTAVVTEILTMTCIAVERHQGLIHPFKMKWQYTTRRAFTILGVVWLAAIIVGSPMWHVQRLEIKYDFLYEKEHVCCLEEWASPMHQRIYTTFILVILFLLPLVVMLVLYSKIGYELWIKKRVGDSSALQTIHGKEMSKIARKKKRAVVMMVTVVALFAACWAPFHVVHMMVEYSNFEKEYDDVTIKMVFAVAQTIGFFNSICNPFVYAFMNENFKKNFLSAVCYCIVRETFSPGQKPGNSGISMMQKRAKLSRSQRPVAEAKGDLFSDANVDVKLCEQPGEKRQLKRQLAFFSSELSENSTFGSGHEL.

At 1 to 46 the chain is on the extracellular side; sequence MQALNITAEQFSRLLSAHNLTREQFIHRYGLRPLVYTPELPARAKL. N-linked (GlcNAc...) asparagine glycosylation is found at asparagine 5 and asparagine 19. Residues 47-67 traverse the membrane as a helical segment; that stretch reads AFALAGALIFALALFGNSLVI. The Cytoplasmic portion of the chain corresponds to 68-81; it reads YVVTRSKAMRTVTN. A helical membrane pass occupies residues 82–102; the sequence is IFICSLALSDLLIAFFCIPVT. The Extracellular portion of the chain corresponds to 103–120; it reads MLQNISDKWLGGAFICKM. A helical membrane pass occupies residues 121–141; the sequence is VPFVQSTAVVTEILTMTCIAV. Residues 142 to 162 are Cytoplasmic-facing; that stretch reads ERHQGLIHPFKMKWQYTTRRA. A helical transmembrane segment spans residues 163–183; sequence FTILGVVWLAAIIVGSPMWHV. At 184-212 the chain is on the extracellular side; the sequence is QRLEIKYDFLYEKEHVCCLEEWASPMHQR. Residues 213–233 form a helical membrane-spanning segment; that stretch reads IYTTFILVILFLLPLVVMLVL. Topologically, residues 234-271 are cytoplasmic; it reads YSKIGYELWIKKRVGDSSALQTIHGKEMSKIARKKKRA. A helical membrane pass occupies residues 272–292; the sequence is VVMMVTVVALFAACWAPFHVV. At 293 to 313 the chain is on the extracellular side; sequence HMMVEYSNFEKEYDDVTIKMV. Residues 314–334 traverse the membrane as a helical segment; the sequence is FAVAQTIGFFNSICNPFVYAF. Over 335–433 the chain is Cytoplasmic; sequence MNENFKKNFL…NSTFGSGHEL (99 aa).

It belongs to the G-protein coupled receptor 1 family. Expressed widely in the brain with high levels in the cortex and hypothalamus, and moderate levels in the brain stem, caudate nucleus, midbrain hippocampus, thalamus, trigeminal ganglia and spinal cord. Particularly strong expression detected in the mitral cell layer of the olfactory bulb, accessory olfactory bulb, island of Calleja and nucleus of the solitary tract. In peripheral tissues, expressed at moderate levels in the eye, liver, kidney, pituitary gland, testis and thymus.

Its subcellular location is the cell membrane. In terms of biological role, receptor for the orexigenic neuropeptide QRFP. The activity of this receptor is mediated by G proteins that modulate adenylate cyclase activity and intracellular calcium levels. This Mus musculus (Mouse) protein is Pyroglutamylated RF-amide peptide receptor (Qrfpr).